The chain runs to 910 residues: Dynein axonemal assembly factor 1 homolog (910 aa).

5 LRR repeats span residues 43 to 64 (GLKC…DHQS), 65 to 86 (QLRC…QHCK), 87 to 108 (QLDT…GSDI), 111 to 132 (VLNT…AELR), and 136 to 157 (FVSV…KVLA). Residues 171–209 (PVVNDIPSYRKTLILECKSLTYLDSRPVFDKDRACAEAW) enclose the LRRCT domain. Basic and acidic residues predominate over residues 217 to 230 (ERKEHQRWKKEEQR). 6 disordered regions span residues 217–275 (ERKE…GDFE), 297–332 (TKGD…DPTL), 344–399 (SRAC…GSIL), 620–642 (EQVP…PVDQ), 662–682 (QVEV…IPEE), and 855–910 (EELE…QGDH). The span at 314 to 331 (STNSVDYITGSDSNSDPT) shows a compositional bias: polar residues. A compositionally biased stretch (low complexity) spans 380 to 389 (SLSDSSSSSS). The span at 620–633 (EQVPDEVEANDKAS) shows a compositional bias: basic and acidic residues. Residues 855 to 865 (EELEELNEEED) show a composition bias toward acidic residues. The segment covering 866–878 (PALKEAGDFKHDE) has biased composition (basic and acidic residues).

It belongs to the DNAAF1 family.

It is found in the cell projection. It localises to the cilium. Functionally, cilium-specific protein required for cilia structures. This Anopheles gambiae (African malaria mosquito) protein is Dynein axonemal assembly factor 1 homolog.